The primary structure comprises 154 residues: UPF0547 protein C16orf87 homolog (154 aa).

A disordered region spans residues 46 to 119 (HPEKAPSSTE…KHEEEREKQE (74 aa)). Basic and acidic residues predominate over residues 68-84 (VRREKINSTVNKDLENR). The residue at position 91 (serine 91) is a Phosphoserine. The stretch at 104 to 132 (KSASAKKHEEEREKQEKEIDIYANLSDEK) forms a coiled coil. Residues 109-119 (KKHEEEREKQE) are compositionally biased toward basic and acidic residues.

The protein belongs to the UPF0547 family.

The chain is UPF0547 protein C16orf87 homolog from Bos taurus (Bovine).